A 619-amino-acid polypeptide reads, in one-letter code: uncharacterized protein (619 aa).

An N-terminal signal peptide occupies residues 1 to 21 (MKKLIAIIAVAAVVIAGFVFT).

This is an uncharacterized protein from Archaeoglobus fulgidus (strain ATCC 49558 / DSM 4304 / JCM 9628 / NBRC 100126 / VC-16).